The following is a 442-amino-acid chain: Septin-8 (442 aa).

The segment covering 1-16 has biased composition (basic and acidic residues); the sequence is MAATDLERVSSAEPEP. The segment at 1 to 23 is disordered; sequence MAATDLERVSSAEPEPRSLSLGG. N-acetylalanine is present on Ala2. Phosphoserine is present on Ser10. The Septin-type G domain maps to 41 to 307; the sequence is QGFSFNILCV…ELYRRCKLEE (267 aa). The interval 51–58 is G1 motif; the sequence is GETGIGKS. Residues 51-58, Gly106, 187-195, Gly241, and Arg256 each bind GTP; these read GETGIGKS and KADTISKSE. The interval 103 to 106 is G3 motif; that stretch reads DAVG. The segment at 186-189 is G4 motif; that stretch reads AKAD. Residues 322–410 are a coiled coil; sequence LQETYEAKRK…RKAAVEALQS (89 aa). Basic and acidic residues predominate over residues 377-391; sequence HQEEKRKVEEKRREL. Residues 377–442 are disordered; that stretch reads HQEEKRKVEE…WSSIYSVTIP (66 aa). 2 stretches are compositionally biased toward polar residues: residues 408-420 and 432-442; these read LQSQ…SQQP and GWSSIYSVTIP.

This sequence belongs to the TRAFAC class TrmE-Era-EngA-EngB-Septin-like GTPase superfamily. Septin GTPase family. As to quaternary structure, septins polymerize into heterooligomeric protein complexes that form filaments, and can associate with cellular membranes, actin filaments and microtubules. GTPase activity is required for filament formation. Interacts with CDK14, SEPTIN4, SEPTIN5 and SEPTIN7. Interacts with VAMP2; the interaction inhibits interaction of VAMP2 with SYP. Interacts with STX1A.

The protein resides in the cytoplasm. Its subcellular location is the cytoskeleton. The protein localises to the synapse. It is found in the cell projection. It localises to the axon. The protein resides in the cytoplasmic vesicle. Its subcellular location is the secretory vesicle. The protein localises to the synaptic vesicle membrane. It is found in the presynapse. Filament-forming cytoskeletal GTPase. May play a role in platelet secretion. Seems to participate in the process of SNARE complex formation in synaptic vesicles. The protein is Septin-8 of Otolemur garnettii (Small-eared galago).